We begin with the raw amino-acid sequence, 538 residues long: Cytochrome P450 monooxygenase xanG (538 aa).

Residues 44–64 (MILYYLASIPLAIICYLAWYL) traverse the membrane as a helical segment. Residue Asn-378 is glycosylated (N-linked (GlcNAc...) asparagine). Cys-489 is a heme binding site.

This sequence belongs to the cytochrome P450 family. Heme is required as a cofactor.

It is found in the membrane. The protein operates within secondary metabolite biosynthesis. In terms of biological role, cytochrome P450 monooxygenase; part of the gene cluster that mediates the biosynthesis of the isocyanide xanthocillin and its derivatives. The first step of the pathway consists in the conversion of tyrosine into a vinyl-isonitrile intermediate by the isocyanide synthase xanB. Subsequent oxidative dimerization of this intermediate to form xanthocillin may involve the cytochrome P450 monooxygenase xanG, whose expression is coregulated with that of XanB. Xanthocillin can be further modified by the isonitrile hydratase-like protein xanA which introduces N-formyl groups and the methyltransferase xanE which introduces methyl groups, leading to the production of several derivatives including fumiformamide. Finally, fumiformamide can be subject to both oxidative and reductive cyclization to yield melanocins E and F, respectively. The polypeptide is Cytochrome P450 monooxygenase xanG (Aspergillus fumigatus (strain ATCC MYA-4609 / CBS 101355 / FGSC A1100 / Af293) (Neosartorya fumigata)).